Here is a 369-residue protein sequence, read N- to C-terminus: DNA replication and repair protein RecF (369 aa).

30 to 37 (GINAQGKT) provides a ligand contact to ATP.

Belongs to the RecF family.

The protein resides in the cytoplasm. Functionally, the RecF protein is involved in DNA metabolism; it is required for DNA replication and normal SOS inducibility. RecF binds preferentially to single-stranded, linear DNA. It also seems to bind ATP. This is DNA replication and repair protein RecF from Macrococcus caseolyticus (strain JCSC5402) (Macrococcoides caseolyticum).